The sequence spans 246 residues: Putative L,D-transpeptidase YafK (246 aa).

The first 19 residues, 1–19, serve as a signal peptide directing secretion; sequence MRKIALILAMLLIPCVSFA. The 131-residue stretch at 44 to 174 folds into the L,D-TPase catalytic domain; that stretch reads VYIQIFKEER…GQPSVQVSIY (131 aa). His135 acts as the Proton donor/acceptor in catalysis. Cys143 (nucleophile) is an active-site residue.

It belongs to the YkuD family.

It participates in cell wall biogenesis; peptidoglycan biosynthesis. This chain is Putative L,D-transpeptidase YafK (yafK), found in Escherichia coli O157:H7.